Here is a 419-residue protein sequence, read N- to C-terminus: MTTQLEQAWELAKQRFAAVGIDVEEALRQLDRLPVSMHCWQGDDVSGFENPEGSLTGGIQATGNYPGKARNASELRADLEQAMRLIPGPKRLNLHAIYLESDTPVSRDQIKPEHFKNWVEWAKANQLGLDFNPSCFSHPLSADGFTLSHADDRIRQFWIDHCKASRRVSAYFGEQLGTPSVMNIWIPDGMKDITVDRLAPRQRLLAALDEVISEKLNPAHHIDAVESKLFGIGAESYTVGSNEFYLGYATSRQTALCLDAGHFHPTEVISDKISAAMLYVPQLLLHVSRPVRWDSDHVVLLDDETQAIASEIVRHDLFDRVHIGLDFFDASINRIAAWVIGTRNMKKALLRALLEPTAELRKLEAAGDYTARLALLEEQKSLPWQAVWEMYCQRHDTPAGSEWLENVRTYEKEILSRRG.

Residues His262, Asp294, and Asp296 each coordinate Mn(2+).

The protein belongs to the rhamnose isomerase family. As to quaternary structure, homotetramer. Mn(2+) is required as a cofactor.

The protein resides in the cytoplasm. The catalysed reaction is L-rhamnopyranose = L-rhamnulose. It functions in the pathway carbohydrate degradation; L-rhamnose degradation; glycerone phosphate from L-rhamnose: step 1/3. Its function is as follows. Catalyzes the interconversion of L-rhamnose and L-rhamnulose. The protein is L-rhamnose isomerase of Escherichia coli O45:K1 (strain S88 / ExPEC).